The following is a 323-amino-acid chain: o-succinylbenzoate synthase (323 aa).

K134 acts as the Proton donor in catalysis. Residues D162, E191, and D214 each contribute to the Mg(2+) site. K236 functions as the Proton acceptor in the catalytic mechanism.

This sequence belongs to the mandelate racemase/muconate lactonizing enzyme family. MenC type 1 subfamily. The cofactor is a divalent metal cation.

The enzyme catalyses (1R,6R)-6-hydroxy-2-succinyl-cyclohexa-2,4-diene-1-carboxylate = 2-succinylbenzoate + H2O. The protein operates within quinol/quinone metabolism; 1,4-dihydroxy-2-naphthoate biosynthesis; 1,4-dihydroxy-2-naphthoate from chorismate: step 4/7. It participates in quinol/quinone metabolism; menaquinone biosynthesis. Converts 2-succinyl-6-hydroxy-2,4-cyclohexadiene-1-carboxylate (SHCHC) to 2-succinylbenzoate (OSB). The polypeptide is o-succinylbenzoate synthase (Edwardsiella ictaluri (strain 93-146)).